Here is a 200-residue protein sequence, read N- to C-terminus: NADH-quinone oxidoreductase subunit C (200 aa).

It belongs to the complex I 30 kDa subunit family. As to quaternary structure, NDH-1 is composed of 14 different subunits. Subunits NuoB, C, D, E, F, and G constitute the peripheral sector of the complex.

Its subcellular location is the cell inner membrane. It catalyses the reaction a quinone + NADH + 5 H(+)(in) = a quinol + NAD(+) + 4 H(+)(out). Its function is as follows. NDH-1 shuttles electrons from NADH, via FMN and iron-sulfur (Fe-S) centers, to quinones in the respiratory chain. The immediate electron acceptor for the enzyme in this species is believed to be ubiquinone. Couples the redox reaction to proton translocation (for every two electrons transferred, four hydrogen ions are translocated across the cytoplasmic membrane), and thus conserves the redox energy in a proton gradient. The protein is NADH-quinone oxidoreductase subunit C of Burkholderia thailandensis (strain ATCC 700388 / DSM 13276 / CCUG 48851 / CIP 106301 / E264).